The sequence spans 277 residues: Undecaprenyl-diphosphatase 2 (277 aa).

The next 6 helical transmembrane spans lie at 43-63 (RAMA…VWEF), 87-107 (LLIA…TIHE), 109-129 (LFNP…MLWA), 183-203 (AATE…AVYS), 214-234 (SDLP…MIAV), and 254-274 (IAFG…WTAA).

It belongs to the UppP family.

It localises to the cell inner membrane. The catalysed reaction is di-trans,octa-cis-undecaprenyl diphosphate + H2O = di-trans,octa-cis-undecaprenyl phosphate + phosphate + H(+). Catalyzes the dephosphorylation of undecaprenyl diphosphate (UPP). Confers resistance to bacitracin. This chain is Undecaprenyl-diphosphatase 2, found in Pseudomonas fluorescens (strain Pf0-1).